The chain runs to 242 residues: uncharacterized protein (242 aa).

Disordered regions lie at residues 16 to 121 (GLYK…GAMA) and 152 to 178 (PVRP…TQPV). Pro residues-rich tracts occupy residues 50 to 64 (PRPP…PSPA) and 97 to 113 (EPRP…PPGP). Over residues 157 to 172 (KLPKGKGRLRRPRQSR) the composition is skewed to basic residues. Residue Thr175 is modified to Phosphothreonine. 5 positions are modified to phosphoserine: Ser192, Ser206, Ser216, Ser232, and Ser238. The disordered stretch occupies residues 215 to 242 (QSLSLQREPLGSCKLRNSLDSSDSDSAL). Positions 232-242 (SLDSSDSDSAL) are enriched in low complexity.

It localises to the cytoplasm. This is an uncharacterized protein from Rattus norvegicus (Rat).